A 917-amino-acid polypeptide reads, in one-letter code: Hexokinase-2 (917 aa).

Methionine 1 is subject to N-acetylmethionine. Residues 1–16 (MIASHMIACLFTELNQ) form a mitochondrial-binding peptide (MBP) region. 2 Hexokinase domains span residues 16–458 (QNQV…MVTA) and 464–906 (ADQH…LITA). Residues arginine 30 and 84–89 (DLGGTN) each bind ATP. The segment at 73–207 (DGTEHGEFLA…DFDIDIVAVV (135 aa)) is hexokinase small subdomain 1. Residue 84–88 (DLGGT) participates in D-glucose 6-phosphate binding. D-glucose is bound by residues 155–156 (SF), 172–173 (TK), and 208–209 (ND). A hexokinase large subdomain 1 region spans residues 208-447 (NDTVGTMMTC…CDVRFLRSED (240 aa)). D-glucose 6-phosphate contacts are provided by aspartate 209 and threonine 232. D-glucose contacts are provided by residues asparagine 235, glutamate 260, and 291–294 (QLFE). 413 to 415 (DGS) is a binding site for D-glucose 6-phosphate. Position 425–426 (425–426 (KR)) interacts with ATP. D-glucose 6-phosphate is bound by residues serine 449 and 532 to 536 (DLGGT). The hexokinase small subdomain 2 stretch occupies residues 521–655 (DGTEKGDFLA…EFDLDVVAVV (135 aa)). Residue 532-537 (DLGGTN) coordinates ATP. D-glucose is bound by residues 603-604 (SF), 620-621 (TK), and 656-657 (ND). Positions 656–895 (NDTVGTMMTC…CDVSFLESED (240 aa)) are hexokinase large subdomain 2. D-glucose 6-phosphate is bound by residues aspartate 657 and threonine 680. Threonine 680 is an ATP binding site. Residues 682–683 (SN), glutamate 708, and 739–742 (QRFE) contribute to the D-glucose site. ATP contacts are provided by residues 747-748 (GM), 784-788 (TKFLS), and 863-867 (TLYKL). D-glucose 6-phosphate-binding positions include 861–863 (DGT) and serine 897.

This sequence belongs to the hexokinase family. Monomer. Interacts with TIGAR; the interaction increases hexokinase activity in a hypoxia- and HIF1A-dependent manner.

The protein localises to the mitochondrion outer membrane. It is found in the cytoplasm. Its subcellular location is the cytosol. The catalysed reaction is a D-hexose + ATP = a D-hexose 6-phosphate + ADP + H(+). It catalyses the reaction D-fructose + ATP = D-fructose 6-phosphate + ADP + H(+). It carries out the reaction D-glucose + ATP = D-glucose 6-phosphate + ADP + H(+). The protein operates within carbohydrate metabolism; hexose metabolism. Its pathway is carbohydrate degradation; glycolysis; D-glyceraldehyde 3-phosphate and glycerone phosphate from D-glucose: step 1/4. Hexokinase activity is specifically inhibited by 2,6-disubstituted glucosamines. Catalyzes the phosphorylation of hexose, such as D-glucose and D-fructose, to hexose 6-phosphate (D-glucose 6-phosphate and D-fructose 6-phosphate, respectively). Mediates the initial step of glycolysis by catalyzing phosphorylation of D-glucose to D-glucose 6-phosphate. Plays a key role in maintaining the integrity of the outer mitochondrial membrane by preventing the release of apoptogenic molecules from the intermembrane space and subsequent apoptosis. The chain is Hexokinase-2 from Rattus norvegicus (Rat).